A 206-amino-acid chain; its full sequence is MAVRSKSSKAWLHEHVNDHYVHMAQKDGYRARAAYKLLEINEKDKLIKPGTVLADLGSAPGSWSQVAAKLTGTSGAVFALDILPMEAIGGVSFIQGDFRENDVLAQFEGLLNNRPLDLVICDMAPNMSGNAVSDQARSFYLCELALDFASQHLKTGGSFLVKVFQGAGYQEYMAAMREFFGTVQTRKPEASRNRSSEIYLLGKNKR.

Positions 61, 63, 81, 97, and 122 each coordinate S-adenosyl-L-methionine. Catalysis depends on Lys162, which acts as the Proton acceptor.

This sequence belongs to the class I-like SAM-binding methyltransferase superfamily. RNA methyltransferase RlmE family.

The protein resides in the cytoplasm. It catalyses the reaction uridine(2552) in 23S rRNA + S-adenosyl-L-methionine = 2'-O-methyluridine(2552) in 23S rRNA + S-adenosyl-L-homocysteine + H(+). Functionally, specifically methylates the uridine in position 2552 of 23S rRNA at the 2'-O position of the ribose in the fully assembled 50S ribosomal subunit. The protein is Ribosomal RNA large subunit methyltransferase E of Neisseria meningitidis serogroup C / serotype 2a (strain ATCC 700532 / DSM 15464 / FAM18).